The following is a 342-amino-acid chain: tRNA N6-adenosine threonylcarbamoyltransferase (342 aa).

Fe cation-binding residues include H111 and H115. Residues 134-138, D167, G180, and N277 each bind substrate; that span reads LVSGG. Fe cation is bound at residue D305.

It belongs to the KAE1 / TsaD family. The cofactor is Fe(2+).

The protein resides in the cytoplasm. It catalyses the reaction L-threonylcarbamoyladenylate + adenosine(37) in tRNA = N(6)-L-threonylcarbamoyladenosine(37) in tRNA + AMP + H(+). Functionally, required for the formation of a threonylcarbamoyl group on adenosine at position 37 (t(6)A37) in tRNAs that read codons beginning with adenine. Is involved in the transfer of the threonylcarbamoyl moiety of threonylcarbamoyl-AMP (TC-AMP) to the N6 group of A37, together with TsaE and TsaB. TsaD likely plays a direct catalytic role in this reaction. This chain is tRNA N6-adenosine threonylcarbamoyltransferase, found in Cellvibrio japonicus (strain Ueda107) (Pseudomonas fluorescens subsp. cellulosa).